A 659-amino-acid polypeptide reads, in one-letter code: Acetyl-coenzyme A synthetase (659 aa).

A disordered region spans residues 1 to 35; that stretch reads MATEQTKGQSSESISSVLSERRKFPPPEAFSSQSH. Residues 205 to 208, Thr323, and Asn347 each bind CoA; that span reads RRGS. Residues 399–401, 423–428, Asp512, and Arg527 contribute to the ATP site; these read GEP and DTWWQT. Ser535 lines the CoA pocket. Arg538 lines the ATP pocket. Residues Val549, His551, and Val554 each contribute to the Mg(2+) site. Residue Lys621 is modified to N6-acetyllysine.

The protein belongs to the ATP-dependent AMP-binding enzyme family. It depends on Mg(2+) as a cofactor. In terms of processing, acetylated. Deacetylation by the SIR2-homolog deacetylase activates the enzyme.

The enzyme catalyses acetate + ATP + CoA = acetyl-CoA + AMP + diphosphate. In terms of biological role, catalyzes the conversion of acetate into acetyl-CoA (AcCoA), an essential intermediate at the junction of anabolic and catabolic pathways. AcsA undergoes a two-step reaction. In the first half reaction, AcsA combines acetate with ATP to form acetyl-adenylate (AcAMP) intermediate. In the second half reaction, it can then transfer the acetyl group from AcAMP to the sulfhydryl group of CoA, forming the product AcCoA. The sequence is that of Acetyl-coenzyme A synthetase from Chlorobaculum tepidum (strain ATCC 49652 / DSM 12025 / NBRC 103806 / TLS) (Chlorobium tepidum).